We begin with the raw amino-acid sequence, 162 residues long: uncharacterized protein (162 aa).

It belongs to the LOR family.

This is an uncharacterized protein from Bacillus subtilis (strain 168).